The sequence spans 206 residues: Cell division protein SepF (206 aa).

Basic and acidic residues predominate over residues 31-53; sequence EEKERRKTERQEQRQAVKQEKRT. Positions 31–81 are disordered; the sequence is EEKERRKTERQEQRQAVKQEKRTFPSQRPAFSEEAPTSSSSKLSAASGSSD. A compositionally biased stretch (low complexity) spans 60-80; it reads AFSEEAPTSSSSKLSAASGSS.

It belongs to the SepF family. In terms of assembly, homodimer. Interacts with FtsZ.

The protein localises to the cytoplasm. In terms of biological role, cell division protein that is part of the divisome complex and is recruited early to the Z-ring. Probably stimulates Z-ring formation, perhaps through the cross-linking of FtsZ protofilaments. Its function overlaps with FtsA. The polypeptide is Cell division protein SepF (Lachnoclostridium phytofermentans (strain ATCC 700394 / DSM 18823 / ISDg) (Clostridium phytofermentans)).